The primary structure comprises 54 residues: UPF0391 membrane protein RC1_1636 (54 aa).

2 helical membrane passes run 3–23 (YWALIFFVVALVAGVLGFGGI) and 30–50 (IAQILFFIFLVIFVVSLIMGL).

Belongs to the UPF0391 family.

Its subcellular location is the cell membrane. The polypeptide is UPF0391 membrane protein RC1_1636 (Rhodospirillum centenum (strain ATCC 51521 / SW)).